We begin with the raw amino-acid sequence, 353 residues long: Putative protein SPATA31J1 (353 aa).

Residues 34–54 (IPQIIHFVLFVVFSLVILIIL) traverse the membrane as a helical segment. A disordered region spans residues 122–271 (EGSSHHLPRQ…NPGWVSWSDS (150 aa)). Low complexity predominate over residues 182–195 (SVESLGSPSSLSSS). Over residues 211–221 (PPASTLSPNPT) the composition is skewed to polar residues. Low complexity predominate over residues 222 to 237 (SSTESLGYLSSLSSSQ). Residues 244-262 (PLKHPSHKPRGRSLPRRRN) are compositionally biased toward basic residues.

It belongs to the SPATA31 family.

The protein resides in the membrane. The polypeptide is Putative protein SPATA31J1 (Homo sapiens (Human)).